The following is a 289-amino-acid chain: MRKLTSFACGTGAGLAAYYLQRLRDPQTAVQNSWTHSDKPVDPWALWDTNWDCREPRALVRPLRNSQPEEENRYNAELEKAKAKKARHIILVRHGEYLDVGDSDDTHHLTERGRKQAEFTGKRLCELGIKWDKVVASTMMRAQETSDIILKQIDFEKEKVVNCAFLREGAPIPPQPPVGHWKPEASQFLRDGSRIEAGFRRYFHRAYPDQEKESYTLIVGHGNVIRYFVCRALQFPAEGWLRININHASITWLTISPSGNVSIKYLGDSGFMPAELLTNRIPRDVKNVV.

The chain crosses the membrane as a helical span at residues 7–23 (FACGTGAGLAAYYLQRL).

Belongs to the phosphoglycerate mutase family. BPG-dependent PGAM subfamily. In terms of assembly, interacts with Pk92B/ASK1.

It is found in the mitochondrion outer membrane. It carries out the reaction O-phospho-L-seryl-[protein] + H2O = L-seryl-[protein] + phosphate. It catalyses the reaction O-phospho-L-threonyl-[protein] + H2O = L-threonyl-[protein] + phosphate. In terms of biological role, displays phosphatase activity for serine/threonine residues, and dephosphorylates and activates Pk92B kinase. Has apparently no phosphoglycerate mutase activity. This is Serine/threonine-protein phosphatase Pgam5, mitochondrial from Drosophila sechellia (Fruit fly).